The sequence spans 269 residues: 4-hydroxy-tetrahydrodipicolinate reductase (269 aa).

Residues Gly13–Met18 and Asp39 contribute to the NAD(+) site. NADP(+) is bound at residue Arg40. NAD(+) is bound by residues Gly101–Thr103 and Ala125–Met128. The Proton donor/acceptor role is filled by His158. Residue His159 participates in (S)-2,3,4,5-tetrahydrodipicolinate binding. The Proton donor role is filled by Lys162. Gly168–Thr169 lines the (S)-2,3,4,5-tetrahydrodipicolinate pocket.

This sequence belongs to the DapB family.

It is found in the cytoplasm. The enzyme catalyses (S)-2,3,4,5-tetrahydrodipicolinate + NAD(+) + H2O = (2S,4S)-4-hydroxy-2,3,4,5-tetrahydrodipicolinate + NADH + H(+). It catalyses the reaction (S)-2,3,4,5-tetrahydrodipicolinate + NADP(+) + H2O = (2S,4S)-4-hydroxy-2,3,4,5-tetrahydrodipicolinate + NADPH + H(+). It participates in amino-acid biosynthesis; L-lysine biosynthesis via DAP pathway; (S)-tetrahydrodipicolinate from L-aspartate: step 4/4. Catalyzes the conversion of 4-hydroxy-tetrahydrodipicolinate (HTPA) to tetrahydrodipicolinate. This Bordetella pertussis (strain Tohama I / ATCC BAA-589 / NCTC 13251) protein is 4-hydroxy-tetrahydrodipicolinate reductase.